The sequence spans 265 residues: Cytochrome c oxidase subunit 3 (265 aa).

6 consecutive transmembrane segments (helical) span residues 41-61, 85-105, 137-157, 162-182, 200-220, and 245-265; these read GGAR…FVWW, GFIL…WAFF, TLIL…ILAG, AVYA…FQGM, FFLA…FLII, and WHFV…WGGI.

This sequence belongs to the cytochrome c oxidase subunit 3 family. As to quaternary structure, component of the cytochrome c oxidase (complex IV, CIV), a multisubunit enzyme composed of a catalytic core of 3 subunits and several supernumerary subunits. The complex exists as a monomer or a dimer and forms supercomplexes (SCs) in the inner mitochondrial membrane with ubiquinol-cytochrome c oxidoreductase (cytochrome b-c1 complex, complex III, CIII).

It localises to the mitochondrion inner membrane. It catalyses the reaction 4 Fe(II)-[cytochrome c] + O2 + 8 H(+)(in) = 4 Fe(III)-[cytochrome c] + 2 H2O + 4 H(+)(out). Its function is as follows. Component of the cytochrome c oxidase, the last enzyme in the mitochondrial electron transport chain which drives oxidative phosphorylation. The respiratory chain contains 3 multisubunit complexes succinate dehydrogenase (complex II, CII), ubiquinol-cytochrome c oxidoreductase (cytochrome b-c1 complex, complex III, CIII) and cytochrome c oxidase (complex IV, CIV), that cooperate to transfer electrons derived from NADH and succinate to molecular oxygen, creating an electrochemical gradient over the inner membrane that drives transmembrane transport and the ATP synthase. Cytochrome c oxidase is the component of the respiratory chain that catalyzes the reduction of oxygen to water. Electrons originating from reduced cytochrome c in the intermembrane space (IMS) are transferred via the dinuclear copper A center (CU(A)) of subunit 2 and heme A of subunit 1 to the active site in subunit 1, a binuclear center (BNC) formed by heme A3 and copper B (CU(B)). The BNC reduces molecular oxygen to 2 water molecules using 4 electrons from cytochrome c in the IMS and 4 protons from the mitochondrial matrix. This is Cytochrome c oxidase subunit 3 (COX3) from Arabidopsis thaliana (Mouse-ear cress).